The primary structure comprises 499 residues: Hexokinase-2, chloroplastic (499 aa).

The transit peptide at Met-1–Ile-30 directs the protein to the chloroplast. The 452-residue stretch at Leu-39 to Ala-490 folds into the Hexokinase domain. A hexokinase small subdomain region spans residues Thr-94–Val-232. ADP contacts are provided by Gly-108, Thr-109, and Asn-110. Thr-198, Lys-199, Asn-233, and Asp-234 together coordinate D-glucose. The segment at Asn-233–Asp-479 is hexokinase large subdomain. ADP is bound at residue Thr-257. D-glucose contacts are provided by Asn-260, Glu-288, and Glu-318. Gly-444 contacts ADP.

This sequence belongs to the hexokinase family. Expressed in vascular starch sheath, xylem parenchyma, guard cells and root tips.

The protein localises to the plastid. The protein resides in the chloroplast stroma. The catalysed reaction is a D-hexose + ATP = a D-hexose 6-phosphate + ADP + H(+). It carries out the reaction D-fructose + ATP = D-fructose 6-phosphate + ADP + H(+). The enzyme catalyses D-glucose + ATP = D-glucose 6-phosphate + ADP + H(+). It functions in the pathway carbohydrate metabolism; hexose metabolism. The protein operates within carbohydrate degradation; glycolysis; D-glyceraldehyde 3-phosphate and glycerone phosphate from D-glucose: step 1/4. Functionally, fructose and glucose phosphorylating enzyme. The protein is Hexokinase-2, chloroplastic (HXK2) of Nicotiana tabacum (Common tobacco).